A 206-amino-acid polypeptide reads, in one-letter code: Small ribosomal subunit protein uS4 (206 aa).

Residues 96 to 160 (CRLDNVVYRM…AQLRIVQALE (65 aa)) form the S4 RNA-binding domain.

Belongs to the universal ribosomal protein uS4 family. As to quaternary structure, part of the 30S ribosomal subunit. Contacts protein S5. The interaction surface between S4 and S5 is involved in control of translational fidelity.

One of the primary rRNA binding proteins, it binds directly to 16S rRNA where it nucleates assembly of the body of the 30S subunit. In terms of biological role, with S5 and S12 plays an important role in translational accuracy. This is Small ribosomal subunit protein uS4 from Pseudomonas putida (strain GB-1).